We begin with the raw amino-acid sequence, 363 residues long: Phospho-N-acetylmuramoyl-pentapeptide-transferase (363 aa).

11 helical membrane-spanning segments follow: residues 4–24, 28–48, 72–92, 96–116, 129–149, 169–189, 200–220, 241–261, 266–286, 294–314, and 342–362; these read NLLV…NVIV, IAIL…IKYF, TPTM…LMLA, NIYV…GLID, INAT…CMIV, LTID…IGSS, GLVT…CYLA, ELTV…WYNI, IFMG…ISVI, GIIG…IYSI, and IVSR…SSLI.

This sequence belongs to the glycosyltransferase 4 family. MraY subfamily. It depends on Mg(2+) as a cofactor.

Its subcellular location is the cell inner membrane. The enzyme catalyses UDP-N-acetyl-alpha-D-muramoyl-L-alanyl-gamma-D-glutamyl-meso-2,6-diaminopimeloyl-D-alanyl-D-alanine + di-trans,octa-cis-undecaprenyl phosphate = di-trans,octa-cis-undecaprenyl diphospho-N-acetyl-alpha-D-muramoyl-L-alanyl-D-glutamyl-meso-2,6-diaminopimeloyl-D-alanyl-D-alanine + UMP. It participates in cell wall biogenesis; peptidoglycan biosynthesis. Catalyzes the initial step of the lipid cycle reactions in the biosynthesis of the cell wall peptidoglycan: transfers peptidoglycan precursor phospho-MurNAc-pentapeptide from UDP-MurNAc-pentapeptide onto the lipid carrier undecaprenyl phosphate, yielding undecaprenyl-pyrophosphoryl-MurNAc-pentapeptide, known as lipid I. The polypeptide is Phospho-N-acetylmuramoyl-pentapeptide-transferase (Orientia tsutsugamushi (strain Ikeda) (Rickettsia tsutsugamushi)).